A 210-amino-acid polypeptide reads, in one-letter code: Probable nicotinate-nucleotide adenylyltransferase (210 aa).

This sequence belongs to the NadD family.

The enzyme catalyses nicotinate beta-D-ribonucleotide + ATP + H(+) = deamido-NAD(+) + diphosphate. The protein operates within cofactor biosynthesis; NAD(+) biosynthesis; deamido-NAD(+) from nicotinate D-ribonucleotide: step 1/1. In terms of biological role, catalyzes the reversible adenylation of nicotinate mononucleotide (NaMN) to nicotinic acid adenine dinucleotide (NaAD). This Streptococcus pyogenes serotype M1 protein is Probable nicotinate-nucleotide adenylyltransferase.